Here is a 771-residue protein sequence, read N- to C-terminus: ATP-dependent DNA helicase UvrD1 (771 aa).

Positions 1 to 21 (MSVHATDAKPPGPSPADQLLD) are disordered. Residues 21–311 (DGLNPQQRQA…ILLEQNYRST (291 aa)) enclose the UvrD-like helicase ATP-binding domain. ATP is bound by residues 45–50 (GSGKTA) and arginine 309. Positions 312 to 603 (QNILSAANSV…TLMTLHTAKG (292 aa)) constitute a UvrD-like helicase C-terminal domain. The segment at 691 to 716 (FSAPVSGAGRFGSARPSPTRSGASRR) is disordered.

It belongs to the helicase family. UvrD subfamily. In terms of assembly, monomer. The cofactor is Mg(2+).

It carries out the reaction Couples ATP hydrolysis with the unwinding of duplex DNA by translocating in the 3'-5' direction.. The catalysed reaction is ATP + H2O = ADP + phosphate + H(+). Functionally, DNA-dependent ATPase, acting on dsDNA with a 3'-ssDNA tail, unwinding with 3'-to 5'-polarity. Also highly efficient on nicked DNA. Involved in the post-incision events of nucleotide excision repair. This Mycobacterium bovis (strain ATCC BAA-935 / AF2122/97) protein is ATP-dependent DNA helicase UvrD1 (uvrD1).